The primary structure comprises 360 residues: MKKYLALALIAPLLVSCSSSNKKGTEYNEAWVKDTNGFDILMGQFAHNIENIWGYNEVLLAGPKDYVKYTDQYQTRSHINFDAGTITVETIAGTDPRGRLRQAIIKTLLMGDDPNSIDLYSDVDDIQISKEPFLYGQVVDNTGASIRWEWRAARYADYLLQTRLKSRNNGLRVIYSITINLVPNHLDKRAHKYLGMVRQASRKYGVDESLILAIMQTESSFNPYAVSHADAMGLMQVVQHSAGKDVFRSQGKSGLPSRSYLFDPANNIDTGTAYLAMLNNVYLAGIDNPTSRRYAVITAYNGGAGSVLRVFSSDKVQAANIINSMAPGDVYQTLTTRHPSAESRRYLYKVNTAQKSYRRK.

The signal sequence occupies residues 1 to 16; sequence MKKYLALALIAPLLVS. Cysteine 17 is lipidated: N-palmitoyl cysteine. The S-diacylglycerol cysteine moiety is linked to residue cysteine 17.

Belongs to the transglycosylase Slt family.

It localises to the cell outer membrane. It carries out the reaction Exolytic cleavage of the (1-&gt;4)-beta-glycosidic linkage between N-acetylmuramic acid (MurNAc) and N-acetylglucosamine (GlcNAc) residues in peptidoglycan, from either the reducing or the non-reducing ends of the peptidoglycan chains, with concomitant formation of a 1,6-anhydrobond in the MurNAc residue.. Murein-degrading enzyme. May play a role in recycling of muropeptides during cell elongation and/or cell division. The sequence is that of Membrane-bound lytic murein transglycosylase C from Klebsiella pneumoniae (strain 342).